The chain runs to 527 residues: uncharacterized protein (527 aa).

Residues 1–93 (MSYMIAVPDM…AGAYASAEAT (93 aa)) form the PE domain. 3 stretches are compositionally biased toward gly residues: residues 264-286 (IHGHGGVGGDGGTGGQGGDGVQG), 292-384 (GAAG…AGNG), and 472-515 (NGGD…GGSR). Disordered stretches follow at residues 264 to 384 (IHGH…AGNG) and 472 to 527 (NGGD…TPGQ).

The protein belongs to the mycobacterial PE family. PGRS subfamily.

This is an uncharacterized protein from Mycobacterium tuberculosis (strain CDC 1551 / Oshkosh).